The following is a 391-amino-acid chain: Serpin-ZX (391 aa).

The RCL stretch occupies residues 337-361; that stretch reads GTEAAAASAGVIKLRGLLMEEDEID. N-linked (GlcNAc...) asparagine glycosylation occurs at asparagine 375.

It belongs to the serpin family. As to quaternary structure, interacts with RD21A. Expressed in root tips. Expressed in siliques (at protein level).

The protein resides in the secreted. It is found in the extracellular space. It localises to the apoplast. The protein localises to the cytoplasm. Functionally, inhibits metacaspase-9 (MC9) cysteine protease. Functions through cleavage of its reactive center loop and covalent binding to MC9. Involved in the control of elicitor-stimulated programmed cell death (PCD). During infection by the necrotrophic fungal pathogen Botrytis cinerea, functions to protect cells by limiting the PCD-promoting protease RD21A activity that is released from the ER body or vacuole to the cytoplasm. Involved in the control of water stress-induced cell death by limiting the pro-death protease RD21A activity that is released from the vacuole to the cytoplasm. The polypeptide is Serpin-ZX (Arabidopsis thaliana (Mouse-ear cress)).